Consider the following 308-residue polypeptide: KH domain-containing protein At4g26480 (308 aa).

The disordered stretch occupies residues 1–26; sequence MMMMTSLGGGAGGGGGGGGSGGGRFV. The span at 7-24 shows a compositional bias: gly residues; sequence LGGGAGGGGGGGGSGGGR. Positions 165 to 232 constitute a KH domain; that stretch reads DIPVDKYPNY…EHLNEPLHIL (68 aa). The interval 284 to 308 is disordered; that stretch reads EEGSPMSGSISPYNSLGMKRAKTRG. Ser294 carries the phosphoserine modification.

It is found in the nucleus. The polypeptide is KH domain-containing protein At4g26480 (Arabidopsis thaliana (Mouse-ear cress)).